The primary structure comprises 216 residues: Probable transaldolase (216 aa).

Lys83 functions as the Schiff-base intermediate with substrate in the catalytic mechanism.

It belongs to the transaldolase family. Type 3B subfamily.

The protein resides in the cytoplasm. It carries out the reaction D-sedoheptulose 7-phosphate + D-glyceraldehyde 3-phosphate = D-erythrose 4-phosphate + beta-D-fructose 6-phosphate. It functions in the pathway carbohydrate degradation; pentose phosphate pathway; D-glyceraldehyde 3-phosphate and beta-D-fructose 6-phosphate from D-ribose 5-phosphate and D-xylulose 5-phosphate (non-oxidative stage): step 2/3. In terms of biological role, transaldolase is important for the balance of metabolites in the pentose-phosphate pathway. This is Probable transaldolase from Caldanaerobacter subterraneus subsp. tengcongensis (strain DSM 15242 / JCM 11007 / NBRC 100824 / MB4) (Thermoanaerobacter tengcongensis).